The following is a 287-amino-acid chain: Pentatricopeptide repeat-containing protein At4g18975, chloroplastic (287 aa).

The transit peptide at 1 to 34 (MALCNLNPTQGIFPLQGLSKSQEFICFSLLQSPR) directs the protein to the chloroplast. PPR repeat units lie at residues 165-199 (TMGT…HTRS) and 201-235 (PRRL…KVSP).

Belongs to the PPR family. P subfamily.

Its subcellular location is the plastid. It localises to the chloroplast. In Arabidopsis thaliana (Mouse-ear cress), this protein is Pentatricopeptide repeat-containing protein At4g18975, chloroplastic.